Reading from the N-terminus, the 176-residue chain is Crossover junction endodeoxyribonuclease RuvC (176 aa).

Active-site residues include Asp9, Glu69, and Asp141. The Mg(2+) site is built by Asp9, Glu69, and Asp141.

Belongs to the RuvC family. As to quaternary structure, homodimer which binds Holliday junction (HJ) DNA. The HJ becomes 2-fold symmetrical on binding to RuvC with unstacked arms; it has a different conformation from HJ DNA in complex with RuvA. In the full resolvosome a probable DNA-RuvA(4)-RuvB(12)-RuvC(2) complex forms which resolves the HJ. Mg(2+) serves as cofactor.

The protein resides in the cytoplasm. It carries out the reaction Endonucleolytic cleavage at a junction such as a reciprocal single-stranded crossover between two homologous DNA duplexes (Holliday junction).. The RuvA-RuvB-RuvC complex processes Holliday junction (HJ) DNA during genetic recombination and DNA repair. Endonuclease that resolves HJ intermediates. Cleaves cruciform DNA by making single-stranded nicks across the HJ at symmetrical positions within the homologous arms, yielding a 5'-phosphate and a 3'-hydroxyl group; requires a central core of homology in the junction. The consensus cleavage sequence is 5'-(A/T)TT(C/G)-3'. Cleavage occurs on the 3'-side of the TT dinucleotide at the point of strand exchange. HJ branch migration catalyzed by RuvA-RuvB allows RuvC to scan DNA until it finds its consensus sequence, where it cleaves and resolves the cruciform DNA. The sequence is that of Crossover junction endodeoxyribonuclease RuvC from Chromobacterium violaceum (strain ATCC 12472 / DSM 30191 / JCM 1249 / CCUG 213 / NBRC 12614 / NCIMB 9131 / NCTC 9757 / MK).